Reading from the N-terminus, the 225-residue chain is Large ribosomal subunit protein bL25 (225 aa).

Residues 188–225 (EEIEEAEAEAQATDADTATDDSEQTSEEQAEENKEDKE) form a disordered region. The span at 204–217 (TATDDSEQTSEEQA) shows a compositional bias: acidic residues.

The protein belongs to the bacterial ribosomal protein bL25 family. CTC subfamily. As to quaternary structure, part of the 50S ribosomal subunit; part of the 5S rRNA/L5/L18/L25 subcomplex. Contacts the 5S rRNA. Binds to the 5S rRNA independently of L5 and L18.

Its function is as follows. This is one of the proteins that binds to the 5S RNA in the ribosome where it forms part of the central protuberance. In Exiguobacterium sibiricum (strain DSM 17290 / CCUG 55495 / CIP 109462 / JCM 13490 / 255-15), this protein is Large ribosomal subunit protein bL25.